Consider the following 358-residue polypeptide: Alanine racemase (358 aa).

Lys34 (proton acceptor; specific for D-alanine) is an active-site residue. Lys34 is subject to N6-(pyridoxal phosphate)lysine. Residue Arg129 participates in substrate binding. The Proton acceptor; specific for L-alanine role is filled by Tyr254. Residue Met302 coordinates substrate.

The protein belongs to the alanine racemase family. Pyridoxal 5'-phosphate serves as cofactor.

The enzyme catalyses L-alanine = D-alanine. The protein operates within amino-acid biosynthesis; D-alanine biosynthesis; D-alanine from L-alanine: step 1/1. Functionally, catalyzes the interconversion of L-alanine and D-alanine. May also act on other amino acids. This Vibrio atlanticus (strain LGP32) (Vibrio splendidus (strain Mel32)) protein is Alanine racemase (alr).